The sequence spans 292 residues: 32 kDa protein (292 aa).

In terms of biological role, may be involved in transmission by vector nematode species. This chain is 32 kDa protein, found in Bidens pilosa (Hairy beggarticks).